We begin with the raw amino-acid sequence, 347 residues long: Haptoglobin (347 aa).

An N-terminal signal peptide occupies residues Met-1–Ala-18. The Sushi domain occupies Asp-31–Ala-88. Cystine bridges form between Cys-52/Cys-86, Cys-90/Cys-207, Cys-250/Cys-281, and Cys-292/Cys-322. One can recognise a Peptidase S1 domain in the interval Ile-103 to Asn-347. N-linked (GlcNAc...) asparagine glycans are attached at residues Asn-125, Asn-148, Asn-152, and Asn-182. Positions Val-259–Thr-264 are interaction with CD163.

The protein belongs to the peptidase S1 family. As to quaternary structure, tetramer of two alpha and two beta chains; disulfide-linked. The hemoglobin/haptoglobin complex is composed of a haptoglobin dimer bound to two hemoglobin alpha-beta dimers. Interacts with CD163. Interacts with ERGIC3.

The protein resides in the secreted. As a result of hemolysis, hemoglobin is found to accumulate in the kidney and is secreted in the urine. Haptoglobin captures, and combines with free plasma hemoglobin to allow hepatic recycling of heme iron and to prevent kidney damage. Haptoglobin also acts as an antioxidant, has antibacterial activity and plays a role in modulating many aspects of the acute phase response. Hemoglobin/haptoglobin complexes are rapidly cleared by the macrophage CD163 scavenger receptor expressed on the surface of liver Kupfer cells through an endocytic lysosomal degradation pathway. The sequence is that of Haptoglobin (HP) from Pongo abelii (Sumatran orangutan).